The chain runs to 134 residues: Global transcriptional regulator Spx (134 aa).

Cysteines 10 and 13 form a disulfide.

It belongs to the ArsC family. Spx subfamily. In terms of assembly, interacts with the C-terminal domain of the alpha subunit of the RNAP.

The protein resides in the cytoplasm. In terms of biological role, global transcriptional regulator that plays a key role in stress response and exerts either positive or negative regulation of genes. Acts by interacting with the C-terminal domain of the alpha subunit of the RNA polymerase (RNAP). This interaction can enhance binding of RNAP to the promoter region of target genes and stimulate their transcription, or block interaction of RNAP with activator. This is Global transcriptional regulator Spx from Streptococcus pyogenes serotype M1.